We begin with the raw amino-acid sequence, 97 residues long: Osteocalcin (97 aa).

The N-terminal stretch at 1–20 (MKAAALLLLAALLTFSLCRS) is a signal peptide. Positions 21–48 (APDGSDARSAKAFISHRQRAEMVRRQKR) are excised as a propeptide. Residues 49–95 (HYAQDSGVAGAPPNPLEAQREVCELSPDCDELADQIGFQEAYRRFYG) form the Gla domain. Residues Glu-65, Glu-69, Glu-72, and Asp-78 each coordinate Ca(2+). 4-carboxyglutamate occurs at positions 65, 69, and 72. Residues Cys-71 and Cys-77 are joined by a disulfide bond.

The protein belongs to the osteocalcin/matrix Gla protein family. In terms of processing, gamma-carboxyglutamate residues are formed by vitamin K dependent carboxylation by GGCX. These residues are essential for the binding of calcium.

It is found in the secreted. The carboxylated form is one of the main organic components of the bone matrix, which constitutes 1-2% of the total bone protein. The carboxylated form binds strongly to apatite and calcium. This is Osteocalcin (BGLAP) from Gallus gallus (Chicken).